Reading from the N-terminus, the 234-residue chain is Adenosine 5'-phosphosulfate reductase (234 aa).

[4Fe-4S] cluster contacts are provided by Cys-120, Cys-121, Cys-203, and Cys-206. Residue Cys-229 is the Nucleophile; cysteine thiosulfonate intermediate of the active site.

This sequence belongs to the PAPS reductase family. CysH subfamily. The cofactor is [4Fe-4S] cluster.

The protein resides in the cytoplasm. It catalyses the reaction [thioredoxin]-disulfide + sulfite + AMP + 2 H(+) = adenosine 5'-phosphosulfate + [thioredoxin]-dithiol. The protein operates within sulfur metabolism; hydrogen sulfide biosynthesis; sulfite from sulfate. Functionally, catalyzes the formation of sulfite from adenosine 5'-phosphosulfate (APS) using thioredoxin as an electron donor. This is Adenosine 5'-phosphosulfate reductase from Bacillus thuringiensis subsp. konkukian (strain 97-27).